The primary structure comprises 102 residues: Plastocyanin (102 aa).

The 102-residue stretch at 1-102 (AKVEVGDEVG…ANMKGTLTVK (102 aa)) folds into the Plastocyanin-like domain. Positions 37, 87, 90, and 95 each coordinate Cu cation.

This sequence belongs to the plastocyanin family. Requires Cu(2+) as cofactor.

It localises to the plastid. The protein localises to the chloroplast thylakoid membrane. Functionally, participates in electron transfer between P700 and the cytochrome b6-f complex in photosystem I. In Dryopteris crassirhizoma (Thick stemmed wood fern), this protein is Plastocyanin (PETE).